Here is a 318-residue protein sequence, read N- to C-terminus: MGEKRNSCKNKKIVFMGTPEIATYALNALLEKSFDVVAVVCQPDKPIGRKKEIIFSSVKKLAIEKNIKFFQPNKIKEIENELKELNPFAFVTCAFGQFIPDSILSIPEFGCINIHASLLPKYRGGAPIHWAVINGEKETGVCLMRTIKQMDAGDVYCSRKVNIEESDTTSTLFKKMNNLVYDIVLNDLEKVFNLEYPPIKQDESKVSFAYNISKDDEKINFEKNAVEIVNLIRGLSETPGAYCFINDKKMKLFKAVSTNSKSNNAPGTINNISKEGILISTKDFDILVKEVQIEGKNRQEVKNILNGNSEIKIGVTLK.

A (6S)-5,6,7,8-tetrahydrofolate-binding site is contributed by S117 to P120.

Belongs to the Fmt family.

The enzyme catalyses L-methionyl-tRNA(fMet) + (6R)-10-formyltetrahydrofolate = N-formyl-L-methionyl-tRNA(fMet) + (6S)-5,6,7,8-tetrahydrofolate + H(+). Functionally, attaches a formyl group to the free amino group of methionyl-tRNA(fMet). The formyl group appears to play a dual role in the initiator identity of N-formylmethionyl-tRNA by promoting its recognition by IF2 and preventing the misappropriation of this tRNA by the elongation apparatus. In Malacoplasma penetrans (strain HF-2) (Mycoplasma penetrans), this protein is Methionyl-tRNA formyltransferase.